Here is a 211-residue protein sequence, read N- to C-terminus: Guanylate kinase (211 aa).

Positions 5–184 (GLLIVFSGPS…AAERVKRIIE (180 aa)) constitute a Guanylate kinase-like domain. 12–19 (GPSGVGKG) is an ATP binding site.

This sequence belongs to the guanylate kinase family.

It localises to the cytoplasm. It carries out the reaction GMP + ATP = GDP + ADP. Its function is as follows. Essential for recycling GMP and indirectly, cGMP. The chain is Guanylate kinase from Streptococcus pyogenes serotype M1.